A 744-amino-acid chain; its full sequence is 5-methyltetrahydropteroyltriglutamate--homocysteine methyltransferase (744 aa).

Residues 17–20 and lysine 110 contribute to the 5-methyltetrahydropteroyltri-L-glutamate site; that span reads REVK. L-homocysteine-binding positions include 422-424 and glutamate 475; that span reads IGS. Residues 422-424 and glutamate 475 contribute to the L-methionine site; that span reads IGS. Tryptophan 552 is a binding site for 5-methyltetrahydropteroyltri-L-glutamate. Aspartate 590 serves as a coordination point for L-homocysteine. Aspartate 590 contributes to the L-methionine binding site. 5-methyltetrahydropteroyltri-L-glutamate is bound at residue glutamate 596. Residues histidine 632, cysteine 634, and glutamate 656 each coordinate Zn(2+). Histidine 685 acts as the Proton donor in catalysis. Cysteine 717 serves as a coordination point for Zn(2+).

It belongs to the vitamin-B12 independent methionine synthase family. Requires Zn(2+) as cofactor.

It catalyses the reaction 5-methyltetrahydropteroyltri-L-glutamate + L-homocysteine = tetrahydropteroyltri-L-glutamate + L-methionine. Its pathway is amino-acid biosynthesis; L-methionine biosynthesis via de novo pathway; L-methionine from L-homocysteine (MetE route): step 1/1. In terms of biological role, catalyzes the transfer of a methyl group from 5-methyltetrahydrofolate to homocysteine resulting in methionine formation. This is 5-methyltetrahydropteroyltriglutamate--homocysteine methyltransferase from Trichodesmium erythraeum (strain IMS101).